A 287-amino-acid chain; its full sequence is Nucleotide-binding protein VIBHAR_03667 (287 aa).

Glycine 8–serine 15 lines the ATP pocket. Aspartate 56 to asparagine 59 provides a ligand contact to GTP.

This sequence belongs to the RapZ-like family.

Its function is as follows. Displays ATPase and GTPase activities. The sequence is that of Nucleotide-binding protein VIBHAR_03667 from Vibrio campbellii (strain ATCC BAA-1116).